Here is a 306-residue protein sequence, read N- to C-terminus: MGTVVLKLTKEKQETVISDFTRHQVSPPPYARFAARTAGCIVTVYNSGKVMFQGQEAETVAVRYGSPIAKKTVSPASGSLPEGFANWSVVGSDEVGKGDFFGPLVVVAAYVDKTKIELVRELGVRDSKNVSDPEIRTIARDLHAVIPYEYRILHNPDYNRMQRTMTQGKMTALLHNSALNGLLTRLDEPPQAILIDQFAEKAVYYKHLSGETNQVKDNVYFSTKAEGIHVAVAAASILARAIFLKEMDQLSRQTGTEIPKGAGAKVDQVAASLLLRYGPERLQEWTKYHFANTKKAEALAKKRNRP.

Residues 87 to 302 (WSVVGSDEVG…TKKAEALAKK (216 aa)) enclose the RNase H type-2 domain. 3 residues coordinate a divalent metal cation: Asp-93, Glu-94, and Asp-196.

Belongs to the RNase HII family. RnhC subfamily. Mn(2+) serves as cofactor. Requires Mg(2+) as cofactor.

Its subcellular location is the cytoplasm. The enzyme catalyses Endonucleolytic cleavage to 5'-phosphomonoester.. Functionally, endonuclease that specifically degrades the RNA of RNA-DNA hybrids. The sequence is that of Ribonuclease HIII from Exiguobacterium sibiricum (strain DSM 17290 / CCUG 55495 / CIP 109462 / JCM 13490 / 255-15).